We begin with the raw amino-acid sequence, 465 residues long: GDNF family receptor alpha-2 (465 aa).

The N-terminal stretch at 1–21 (MILANAFCIVLFVDETLRSLA) is a signal peptide. Intrachain disulfides connect Cys-40/Cys-93, Cys-47/Cys-53, Cys-63/Cys-78, Cys-95/Cys-105, Cys-159/Cys-220, Cys-166/Cys-172, Cys-183/Cys-198, Cys-193/Cys-239, Cys-222/Cys-227, Cys-249/Cys-321, Cys-256/Cys-262, Cys-273/Cys-291, Cys-283/Cys-345, and Cys-323/Cys-333. 3 N-linked (GlcNAc...) asparagine glycosylation sites follow: Asn-355, Asn-387, and Asn-412. A lipid anchor (GPI-anchor amidated serine) is attached at Ser-445. Residues 446-465 (RHRAARILPAVPIVLLKLLL) constitute a propeptide, removed in mature form.

This sequence belongs to the GDNFR family. In terms of assembly, interacts with NRTN ligand and RET: forms a 2:2:2 ternary complex composed of NRTN ligand, GFRA2 and RET receptor.

It localises to the cell membrane. Its function is as follows. Receptor for neurturin (NRTN), a growth factor that supports the survival of sympathetic neurons. NRTN-binding leads to autophosphorylation and activation of the RET receptor. This Gallus gallus (Chicken) protein is GDNF family receptor alpha-2 (GFRA2).